The chain runs to 367 residues: Glutamate 5-kinase (367 aa).

K17 is a binding site for ATP. 3 residues coordinate substrate: S57, D144, and N156. ATP contacts are provided by residues 176-177 and 217-223; these read SD and TGGMVSK. In terms of domain architecture, PUA spans 279–357; it reads VGSLTLDEGA…SELPCELRRP (79 aa).

It belongs to the glutamate 5-kinase family.

It localises to the cytoplasm. It catalyses the reaction L-glutamate + ATP = L-glutamyl 5-phosphate + ADP. Its pathway is amino-acid biosynthesis; L-proline biosynthesis; L-glutamate 5-semialdehyde from L-glutamate: step 1/2. In terms of biological role, catalyzes the transfer of a phosphate group to glutamate to form L-glutamate 5-phosphate. This is Glutamate 5-kinase from Mycobacterium leprae (strain Br4923).